Reading from the N-terminus, the 283-residue chain is MTGCVNSISPPPVTLYRHRASPSRSSFSLSGDALHSLYRHRRVSRSPSIIAPKFQIVAAEKSEPLKIMISGAPASGKGTQCELITHKYGLVHISAGDLLRAEIASGSENGRRAKEHMEKGQLVPDEIVVMMVKDRLSQTDSEQKGWLLDGYPRSASQATALKGFGFQPDLFIVLEVPEEILIERVVGRRLDPVTGKIYHLKYSPPETEEIAVRLTQRFDDTEEKAKLRLKTHNQNVSDVLSMYDDITIKIEGNRSKEEVFAQIDSSLSELLQERNTAPSSLLS.

The N-terminal 59 residues, 1-59, are a transit peptide targeting the chloroplast; sequence MTGCVNSISPPPVTLYRHRASPSRSSFSLSGDALHSLYRHRRVSRSPSIIAPKFQIVAA. 74 to 79 is an ATP binding site; that stretch reads ASGKGT. The tract at residues 94-123 is NMP; the sequence is SAGDLLRAEIASGSENGRRAKEHMEKGQLV. Residues arginine 100, 121-123, 150-153, and glutamine 157 contribute to the AMP site; these read QLV and GYPR. The tract at residues 187-220 is LID; it reads GRRLDPVTGKIYHLKYSPPETEEIAVRLTQRFDD. An ATP-binding site is contributed by arginine 188. Residues arginine 217 and arginine 228 each contribute to the AMP site.

It belongs to the adenylate kinase family. As to quaternary structure, monomer.

The protein localises to the plastid. It localises to the chloroplast stroma. The enzyme catalyses AMP + ATP = 2 ADP. Its function is as follows. Catalyzes the reversible transfer of the terminal phosphate group between ATP and AMP. Plays an important role in cellular energy homeostasis and in adenine nucleotide metabolism. Plays a major role in the equilibration of adenylates and de novo synthesis of ADP in the plastid stroma. The polypeptide is Adenylate kinase 2, chloroplastic (Arabidopsis thaliana (Mouse-ear cress)).